Here is a 565-residue protein sequence, read N- to C-terminus: Transmembrane 7 superfamily member 3 (565 aa).

The N-terminal stretch at 1 to 21 (MWRLRLLVLAVLAAGSAEAQA) is a signal peptide. N-linked (GlcNAc...) asparagine glycosylation is found at Asn22, Asn56, Asn70, and Asn259. The next 7 helical transmembrane spans lie at 287-307 (VSTK…CFFG), 315-335 (LFFV…TRLT), 341-361 (VRLA…VASW), 364-384 (FGIL…LVSS), 402-422 (VFWV…MGCL), 427-447 (ILAC…SYMF), and 478-498 (NDYI…TLQI).

The protein resides in the cell membrane. Involved in the inhibition of cytokine-induced death of pancreatic beta cells. Involved in the promotion of insulin secretion from pancreatic beta cells. Is a downstream transcriptional target of p53/TP53, and acts as a pro-survival homeostatic factor that attenuates the development of cellular stress. Maintains protein homeostasis and promotes cell survival through attenuation of endoplasmic reticulum (ER) stress and the subsequent induction of unfolded protein response (UPR). The chain is Transmembrane 7 superfamily member 3 (Tm7sf3) from Mus musculus (Mouse).